Consider the following 179-residue polypeptide: Ribosome-recycling factor (179 aa).

It belongs to the RRF family.

The protein resides in the cytoplasm. In terms of biological role, responsible for the release of ribosomes from messenger RNA at the termination of protein biosynthesis. May increase the efficiency of translation by recycling ribosomes from one round of translation to another. The polypeptide is Ribosome-recycling factor (Chlamydia trachomatis serovar A (strain ATCC VR-571B / DSM 19440 / HAR-13)).